A 7311-amino-acid chain; its full sequence is MAM and LDL-receptor class A domain-containing protein 2 (7311 aa).

16 consecutive MAM domains span residues 4–171 (AYCD…SCVT), 199–361 (LDCD…FCSP), 363–530 (KQCT…VCPP), 532–695 (GDCN…NCPV), 727–887 (YDCT…QCPV), 889–1050 (MQCS…ACPL), 1052–1220 (GDCT…RCRL), 1228–1392 (FDCN…SCPS), 1394–1557 (GMCS…SCPA), 1559–1722 (GDCS…NCIQ), 1755–1918 (NDCN…KCPS), 1920–2087 (TDCT…PCPL), 2089–2254 (GDCD…RCSV), 2274–2437 (NNCT…PCPP), 2439–2601 (TVCD…PCPP), and 2603–2771 (GSCD…YCVG). Residues 2461 to 2481 (WKRDSGGTPSAGTGPSRDHTT) form a disordered region. Residues 2466–2475 (GGTPSAGTGP) are compositionally biased toward low complexity. 2 P-type domains span residues 2771-2817 (GLCS…FYHP) and 2818-2862 (SACA…FHGP). 6 cysteine pairs are disulfide-bonded: Cys2773-Cys2802, Cys2784-Cys2801, Cys2795-Cys2813, Cys2820-Cys2847, Cys2831-Cys2846, and Cys2841-Cys2858. MAM domains follow at residues 2883 to 3048 (WDCT…TCPP), 3050 to 3214 (RECD…PCPP), 3216 to 3384 (GSCD…FCPS), and 3429 to 3587 (GACT…NCTL). The region spanning 3593-3628 (SCGQQHRCIRGSCIDRGRVCDYTDDCGDNSDEQNCY) is the LDL-receptor class A 1 domain. Cystine bridges form between Cys3594–Cys3605, Cys3600–Cys3618, and Cys3612–Cys3627. In terms of domain architecture, MAM 21 spans 3632-3794 (YRCSFEKSLC…DLSMTSSCQS (163 aa)). 2 consecutive LDL-receptor class A domains span residues 3814 to 3850 (PCPR…VNCG) and 4016 to 4054 (SCIS…STCA). Cystine bridges form between Cys3815/Cys3827, Cys3822/Cys3840, and Cys3834/Cys3849. The MAM 22 domain occupies 3850–4011 (GSCSFEPGLC…DDVTFQGCAL (162 aa)). Cystine bridges form between Cys4017/Cys4029, Cys4024/Cys4042, and Cys4036/Cys4053. Residues 4058–4221 (ERCNFEQDLC…DVSFTPNCRP (164 aa)) enclose the MAM 23 domain. The region spanning 4239-4276 (GCQPGKFKCANGGNCISVSKVCNFYSDCSGGSDEMNCP) is the LDL-receptor class A 4 domain. 3 disulfide bridges follow: Cys4240–Cys4253, Cys4247–Cys4266, and Cys4260–Cys4275. In terms of domain architecture, MAM 24 spans 4277-4438 (ATCNFQNSFC…DDVSFEHCAE (162 aa)). The LDL-receptor class A 5 domain occupies 4444-4483 (TCSGLSVFRCQSGHCIAMSGKCDFEPDCCDGSEETNIVCA). Cystine bridges form between Cys4445/Cys4458, Cys4453/Cys4471, and Cys4465/Cys4482. In terms of domain architecture, MAM 25 spans 4486–4646 (NRCNFEAGLC…DISFTPDCVV (161 aa)). LDL-receptor class A domains are found at residues 4660–4699 (PTQP…DLCG) and 4859–4899 (YCSG…QSCS). Cystine bridges form between Cys4668–Cys4687, Cys4681–Cys4698, Cys4860–Cys4876, Cys4871–Cys4889, and Cys4883–Cys4898. The region spanning 4700-4862 (WPCDFQRGTC…NNYTLTYCSG (163 aa)) is the MAM 26 domain. In terms of domain architecture, MAM 27 spans 4903–5063 (SRCTFENGLC…SIAMKPSCQQ (161 aa)). One can recognise an LDL-receptor class A 8 domain in the interval 5085–5122 (NCVLPQVPCVSDGKCVSPSQVCDFNLDCADASDERSCP). Cystine bridges form between Cys5086/Cys5099, Cys5093/Cys5112, and Cys5106/Cys5121. Positions 5123 to 5281 (HMCTFESDQC…DDIKFVDCAL (159 aa)) constitute an MAM 28 domain. The 36-residue stretch at 5287–5322 (SCPSQFTCARNSCVSNDYVCDFNDDCGDGSDETLCG) folds into the LDL-receptor class A 9 domain. 3 disulfides stabilise this stretch: Cys5288–Cys5299, Cys5294–Cys5312, and Cys5306–Cys5321. The MAM 29 domain maps to 5326-5489 (TRCDFSRGSC…DVSFTTGCKQ (164 aa)). An LDL-receptor class A 10 domain is found at 5513–5552 (QCTTAEFNCFNQGSGACIPSTQVCNFQPNCNDGVDEQNCA). Disulfide bonds link Cys5514–Cys5529, Cys5521–Cys5542, and Cys5536–Cys5551. Residues 5554-5719 (TKCSFDGGDF…DDIEFLNCVP (166 aa)) form the MAM 30 domain. One can recognise an LDL-receptor class A 11 domain in the interval 5725-5763 (KCTADEFQCARGGCIPKTSVCDFKADCMVGDVSDESSCS). Cystine bridges form between Cys5726–Cys5738, Cys5733–Cys5751, and Cys5745–Cys5762. In terms of domain architecture, MAM 31 spans 5768–5935 (GQCDFEHGLC…LTPGCQICTD (168 aa)). Positions 5957–5993 (PCSLQQYVCKNLRCVDKAQICNFKDDCGDNSDELPCG) constitute an LDL-receptor class A 12 domain. 3 cysteine pairs are disulfide-bonded: Cys5958/Cys5970, Cys5965/Cys5983, and Cys5977/Cys5992. Positions 5994-6156 (SNCTFEGDCY…DISFTDNCFV (163 aa)) constitute an MAM 32 domain. The interval 6014–6034 (NFHWRRRNGKTPSVGTGPTND) is disordered. A compositionally biased stretch (polar residues) spans 6023–6034 (KTPSVGTGPTND). One can recognise an LDL-receptor class A 13 domain in the interval 6161 to 6200 (TCTPNEVKCRTSGHCVAEQRVCDHVKDCNDGTDEDALICS). Disulfide bonds link Cys6162/Cys6175, Cys6169/Cys6188, and Cys6182/Cys6199. The region spanning 6204–6365 (ASCDFDVNWC…DISFSAGCYK (162 aa)) is the MAM 33 domain. The region spanning 6377–6414 (RCSKVQFYCKADDLCINIHWKCDGEKDCTDGADEMLCP) is the LDL-receptor class A 14 domain. 3 cysteine pairs are disulfide-bonded: Cys6378/Cys6391, Cys6385/Cys6404, and Cys6398/Cys6413. MAM domains follow at residues 6430–6590 (ANCN…NCAK), 6606–6779 (LDED…NCDF), 6808–6965 (GDCT…QCQF), and 7173–7311 (GSCN…YNNL).

As to expression, component of the acid-insoluble and acid-soluble organic matrix of the aragonitic skeleton (at protein level).

The protein resides in the secreted. The chain is MAM and LDL-receptor class A domain-containing protein 2 from Acropora millepora (Staghorn coral).